Reading from the N-terminus, the 372-residue chain is Ubl carboxyl-terminal hydrolase 18 (372 aa).

Residues 19-45 (SSQSPADLEEKKEEDSNMKREQPRERP) form a disordered region. Residues 26 to 45 (LEEKKEEDSNMKREQPRERP) are compositionally biased toward basic and acidic residues. Residues 36–51 (MKREQPRERPRAWDYP) form a mediates interaction with IFNAR2 region. Residues 51–112 (PHGLVGLHNI…MLLLLEKMQD (62 aa)) are mediates interaction with STAT2. Residues 55 to 370 (VGLHNIGQTC…TAYLLVYMKM (316 aa)) form the USP domain. Cys-64 (nucleophile) is an active-site residue. The mediates interaction with STAT2 and necessary for the negative regulation of the type I IFN signaling pathway stretch occupies residues 303–312 (ELFAVIAHVG). The segment at 313–372 (MADSGHYCVYIRNAVDGKWFCFNDSNICLVSWEDIQCTYGNPNYHWQETAYLLVYMKMEC) is mediates interaction with IFNAR2. Catalysis depends on His-318, which acts as the Proton acceptor.

Belongs to the peptidase C19 family. In terms of assembly, interacts with STAT2; the interaction is direct. Interacts with IFNAR2; indirectly via STAT2, it negatively regulates the assembly of the ternary interferon-IFNAR1-IFNAR2 complex and inhibits type I interferon signaling. Interacts with STING1. Interacts with USP20.

The protein localises to the cytoplasm. It localises to the nucleus. The catalysed reaction is Thiol-dependent hydrolysis of ester, thioester, amide, peptide and isopeptide bonds formed by the C-terminal Gly of ubiquitin (a 76-residue protein attached to proteins as an intracellular targeting signal).. In terms of biological role, interferon-induced ISG15-specific protease that plays a crucial role for maintaining a proper balance of ISG15-conjugated proteins in cells. Regulates protein ISGylation by efficiently cleaving ISG15 conjugates linked via isopeptide bonds. Regulates T-cell activation and T-helper 17 (Th17) cell differentiation by deubiquitinating TAK1, likely to keep TAK1-TAB complexes in steady conditions. In turn, restricts activation of NF-kappa-B, NFAT, and JNK as well as expression of IL2 in T-cells after TCR activation. Acts as a molecular adapter with USP20 to promote innate antiviral response through deubiquitinating STING1. Involved also in the negative regulation of the inflammatory response triggered by type I interferon. Upon recruitment by STAT2 to the type I interferon receptor subunit IFNAR2 interferes with the assembly of the ternary interferon-IFNAR1-IFNAR2 complex and acts as a negative regulator of the type I interferon signaling pathway. Has enzymatic activity similar to isoform 1 and interferes with type I interferon signaling. Major deISGylation enzyme for nuclear proteins. The sequence is that of Ubl carboxyl-terminal hydrolase 18 (USP18) from Homo sapiens (Human).